The following is a 217-amino-acid chain: MAAGDGDVKLSTLGSGGERGGDGSPGGAGATAARSSWVAALLATGGEMLLNVALVALVLLGAYRLWVRWGRRGLCSGPGAGEESPAATLPRMKKRDFSLEQLRQYDGARTPRILLAVNGKVFDVTKGSKFYGPAGPYGIFAGRDASRGLATFCLDKDALRDEYDDLSDLNAVQMESVREWEMQFKEKYDYVGRLLKPGEEPSEYTDEEDTKDHSKQD.

The O-linked (Xyl...) (chondroitin sulfate) serine glycan is linked to serine 15. The helical transmembrane segment at 40-62 (ALLATGGEMLLNVALVALVLLGA) threads the bilayer. A phosphoserine mark is found at serine 84, serine 98, and serine 202. One can recognise a Cytochrome b5 heme-binding domain in the interval 96 to 195 (DFSLEQLRQY…EKYDYVGRLL (100 aa)). Residues 196–217 (KPGEEPSEYTDEEDTKDHSKQD) form a disordered region. Positions 200-209 (EPSEYTDEED) are enriched in acidic residues. Tyrosine 204 carries the post-translational modification Phosphotyrosine. At threonine 205 the chain carries Phosphothreonine.

Belongs to the cytochrome b5 family. MAPR subfamily. As to quaternary structure, interacts with PGRMC1. Interacts with AAAS.

Its subcellular location is the membrane. It is found in the nucleus envelope. The protein localises to the endoplasmic reticulum. It localises to the secreted. Required for the maintenance of uterine histoarchitecture and normal female reproductive lifespan. May serve as a universal non-classical progesterone receptor in the uterus. Intracellular heme chaperone required for delivery of labile, or signaling heme, to the nucleus. Plays a role in adipocyte function and systemic glucose homeostasis. In brown fat, which has a high demand for heme, delivery of labile heme in the nucleus regulates the activity of heme-responsive transcriptional repressors such as NR1D1 and BACH1. The protein is Membrane-associated progesterone receptor component 2 of Rattus norvegicus (Rat).